The following is a 347-amino-acid chain: N6-Methyl-AMP deaminase-L (347 aa).

Residues histidine 19 and histidine 21 each coordinate Zn(2+). Residues histidine 21, asparagine 23, histidine 69, 101–104 (STPR), aspartate 142, and glycine 175 contribute to the N(6)-methyl-AMP site. Histidine 202 lines the Zn(2+) pocket. The N(6)-methyl-AMP site is built by glutamate 205, aspartate 283, and aspartate 284. The active-site Proton donor is glutamate 205. Residue aspartate 283 participates in Zn(2+) binding.

The protein belongs to the metallo-dependent hydrolases superfamily. Adenosine and AMP deaminases family. As to quaternary structure, monomer. Requires Zn(2+) as cofactor.

It carries out the reaction N(6)-methyl-AMP + H2O + H(+) = IMP + methylamine. Its function is as follows. Catalyzes the hydrolysis of the free cytosolic methylated adenosine nucleotide N(6)-methyl-AMP (N6-mAMP) to produce inositol monophosphate (IMP) and methylamine. Is required for the catabolism of cytosolic N6-mAMP, which is derived from the degradation of mRNA containing N6-methylated adenine (m6A). This Xenopus laevis (African clawed frog) protein is N6-Methyl-AMP deaminase-L (mapda.L).